The sequence spans 102 residues: Putative nuclear receptor corepressor 1-like protein NCOR1P1 (102 aa).

A compositionally biased stretch (polar residues) spans 1-18; the sequence is MSSSGYPPNQGAFSTEQS. The disordered stretch occupies residues 1–68; the sequence is MSSSGYPPNQ…DQNASPSKLS (68 aa). Residues 68-100 adopt a coiled-coil conformation; that stretch reads SKEELIECMDRVDREIAKVEQQILKLKKKQVKV.

It belongs to the N-CoR nuclear receptor corepressors family.

The chain is Putative nuclear receptor corepressor 1-like protein NCOR1P1 (NCOR1P1) from Homo sapiens (Human).